A 115-amino-acid polypeptide reads, in one-letter code: Putative UPF0320 protein YKL225W (115 aa).

Belongs to the UPF0320 family.

This Saccharomyces cerevisiae (strain ATCC 204508 / S288c) (Baker's yeast) protein is Putative UPF0320 protein YKL225W.